A 383-amino-acid chain; its full sequence is Acetylornithine deacetylase (383 aa).

Residue H80 participates in Zn(2+) binding. D82 is an active-site residue. D112 is a Zn(2+) binding site. Residue E144 is part of the active site. Positions 145, 169, and 355 each coordinate Zn(2+).

This sequence belongs to the peptidase M20A family. ArgE subfamily. As to quaternary structure, homodimer. The cofactor is Zn(2+). Co(2+) serves as cofactor. Requires glutathione as cofactor.

It localises to the cytoplasm. It carries out the reaction N(2)-acetyl-L-ornithine + H2O = L-ornithine + acetate. Its pathway is amino-acid biosynthesis; L-arginine biosynthesis; L-ornithine from N(2)-acetyl-L-ornithine (linear): step 1/1. Functionally, catalyzes the hydrolysis of the amide bond of N(2)-acetylated L-amino acids. Cleaves the acetyl group from N-acetyl-L-ornithine to form L-ornithine, an intermediate in L-arginine biosynthesis pathway, and a branchpoint in the synthesis of polyamines. This Salmonella typhi protein is Acetylornithine deacetylase.